The following is a 388-amino-acid chain: N-acetylneuraminate epimerase (388 aa).

A signal peptide spans Met-1 to Ala-26. 7 Kelch repeats span residues Met-48–Gly-92, Lys-94–Ala-147, Gly-149–Asp-186, Ser-187–Gly-232, Phe-236–Ala-285, Ala-307–Gly-356, and Leu-358–Glu-387. Glu-242 acts as the Proton acceptor in catalysis.

This sequence belongs to the NanM family. Homodimer.

It is found in the periplasm. It catalyses the reaction N-acetyl-alpha-neuraminate = N-acetyl-beta-neuraminate. In terms of biological role, converts alpha-N-acetylneuranimic acid (Neu5Ac) to the beta-anomer, accelerating the equilibrium between the alpha- and beta-anomers. Probably facilitates sialidase-negative bacteria to compete successfully for limited amounts of extracellular Neu5Ac, which is likely taken up in the beta-anomer. In addition, the rapid removal of sialic acid from solution might be advantageous to the bacterium to damp down host responses. The protein is N-acetylneuraminate epimerase of Brucella melitensis biotype 1 (strain ATCC 23456 / CCUG 17765 / NCTC 10094 / 16M).